An 84-amino-acid chain; its full sequence is Small ribosomal subunit protein bS18 (84 aa).

It belongs to the bacterial ribosomal protein bS18 family. As to quaternary structure, part of the 30S ribosomal subunit. Forms a tight heterodimer with protein bS6.

Functionally, binds as a heterodimer with protein bS6 to the central domain of the 16S rRNA, where it helps stabilize the platform of the 30S subunit. This chain is Small ribosomal subunit protein bS18, found in Mycobacterium leprae (strain Br4923).